Here is a 238-residue protein sequence, read N- to C-terminus: MTIPAYKRILLKLSGEALMGDDSYGINRDVIERIVAEIAEVNQLGVEVAVVIGGGNIFRGMTSSAEGMDRATADYMGMLATVMNALALQDAMRRAGLVSRVQSALRIDQVVEPYIRGKAIRYLEEGKIVIFAAGTGNPFFTTDTAAALRGMEMNVDIVLKATKVDGVYTTDPKINPDAERYQRLSFDTAIAENLKVMDATALTLCRDQKLPLKVFSIFKAEALRRVVMGEEEGTLVEV.

12–15 contacts ATP; the sequence is KLSG. A UMP-binding site is contributed by glycine 54. Positions 55 and 59 each coordinate ATP. Residues aspartate 74 and 135–142 each bind UMP; that span reads TGNPFFTT. Positions 162, 168, and 171 each coordinate ATP.

The protein belongs to the UMP kinase family. Homohexamer.

The protein localises to the cytoplasm. It carries out the reaction UMP + ATP = UDP + ADP. It participates in pyrimidine metabolism; CTP biosynthesis via de novo pathway; UDP from UMP (UMPK route): step 1/1. With respect to regulation, inhibited by UTP. Its function is as follows. Catalyzes the reversible phosphorylation of UMP to UDP. This chain is Uridylate kinase, found in Nitrosospira multiformis (strain ATCC 25196 / NCIMB 11849 / C 71).